The sequence spans 1477 residues: Oligomycin resistance ATP-dependent permease YOR1 (1477 aa).

The disordered stretch occupies residues 1–48; it reads MTITVGDAVSETELENKSQNVVLSPKASASSDISTDVDKDTSSSWDDK. Residues 1–206 lie on the Cytoplasmic side of the membrane; sequence MTITVGDAVS…RALLFTFKKQ (206 aa). A phosphoserine mark is found at Ser-10 and Ser-24. Basic and acidic residues predominate over residues 36–48; the sequence is DVDKDTSSSWDDK. Thr-53 is subject to Phosphothreonine. The short motif at 71–73 is the Diacidic ER export motif DxE element; sequence DIE. A helical transmembrane segment spans residues 207–227; it reads YFMSIVFAILANCTSGFNPMI. The ABC transmembrane type-1 1 domain maps to 207–493; that stretch reads YFMSIVFAIL…LPIAIGTGID (287 aa). The Extracellular segment spans residues 228–249; the sequence is TKRLIEFVEEKAIFHSMHVNKG. A helical transmembrane segment spans residues 250–270; the sequence is IGYAIGACLMMFVNGLTFNHF. The Cytoplasmic segment spans residues 271 to 328; it reads FHTSQLTGVQAKSILTKAAMKKMFNASNYARHCFPNGKVTSFVTTDLARIEFALSFQP. Residues 329 to 349 traverse the membrane as a helical segment; sequence FLAGFPAILAICIVLLIVNLG. Topologically, residues 350 to 357 are extracellular; the sequence is PIALVGIG. A helical membrane pass occupies residues 358–370; the sequence is IFFGGFFISLFAF. Over 371–433 the chain is Cytoplasmic; the sequence is KLILGFRIAA…KVRKMQLSRN (63 aa). The chain crosses the membrane as a helical span at residues 434-454; it reads FLIAMAMSLPSIASLVTFLAM. Residues 455–478 are Extracellular-facing; sequence YKVNKGGRQPGNIFASLSLFQVLS. The chain crosses the membrane as a helical span at residues 479–499; that stretch reads LQMFFLPIAIGTGIDMIIGLG. The Cytoplasmic segment spans residues 500-615; it reads RLQSLLEAPE…DLNFDIKKGE (116 aa). The disordered stretch occupies residues 552-595; the sequence is KGEAKDEGKKNKKKRKDTWGKPSASTNKAKRLDNMLKDRDGPED. The segment covering 581-595 has biased composition (basic and acidic residues); sequence KRLDNMLKDRDGPED. Residues 581 to 808 form the ABC transporter 1 domain; that stretch reads KRLDNMLKDR…NQTLINLLQF (228 aa). Residues 616-636 form a helical membrane-spanning segment; sequence FIMITGPIGTGKSSLLNAMAG. ATP is bound at residue 621-628; the sequence is GPIGTGKS. Residues 637–892 lie on the Extracellular side of the membrane; that stretch reads SMRKTDGKVE…EYIKAAVGKW (256 aa). Asn-661, Asn-759, and Asn-799 each carry an N-linked (GlcNAc...) asparagine glycan. The chain crosses the membrane as a helical span at residues 893–913; it reads GFIALPLYAILVVGTTFCSLF. The 279-residue stretch at 897 to 1175 folds into the ABC transmembrane type-1 2 domain; that stretch reads LPLYAILVVG…ILRAMTQTEN (279 aa). Residues 914–940 lie on the Cytoplasmic side of the membrane; it reads SSVWLSYWTENKFKNRPPSFYMGLYSF. The helical transmembrane segment at 941 to 961 threads the bilayer; the sequence is FVFAAFIFMNGQFTILCAMGI. Over 962–1027 the chain is Extracellular; that stretch reads MASKWLNLRA…ANIVGVCVMC (66 aa). Residues 1028–1048 traverse the membrane as a helical segment; the sequence is IVYLPWFAIAIPFLLVIFVLI. The Cytoplasmic segment spans residues 1049–1117; it reads ADHYQSSGRE…GYLVVVLQRW (69 aa). A helical transmembrane segment spans residues 1118 to 1138; that stretch reads VGIFLDMVAIAFALIITLLCV. Over 1139–1141 the chain is Extracellular; sequence TRA. A helical transmembrane segment spans residues 1142–1162; the sequence is FPISAASVGVLLTYVLQLPGL. Topologically, residues 1163 to 1477 are cytoplasmic; sequence LNTILRAMTQ…IVENDFENRS (315 aa). An ABC transporter 2 domain is found at 1213–1464; it reads IIFENVDFAY…EDSIFRSMCS (252 aa). 1247-1254 provides a ligand contact to ATP; sequence GRTGAGKS.

It belongs to the ABC transporter superfamily. ABCC family. Conjugate transporter (TC 3.A.1.208) subfamily.

It is found in the cell membrane. It carries out the reaction a 1,2-diacyl-sn-glycero-3-phosphoethanolamine(in) + ATP + H2O = a 1,2-diacyl-sn-glycero-3-phosphoethanolamine(out) + ADP + phosphate + H(+). The catalysed reaction is Cd(2+)(in) + ATP + H2O = Cd(2+)(out) + ADP + phosphate + H(+). The enzyme catalyses an S-substituted glutathione(in) + ATP + H2O = an S-substituted glutathione(out) + ADP + phosphate + H(+). Functions as a pleiotropic drug pump at the plasma membrane to clear toxic substances from the cytosol. Organic anion transporter involved in the detoxification of a wide range of toxic environmental organic anions that contain carboxyl groups. Required for tolerance to reveromycin A, tautomycin and leptomycin B. Required for oligomycin resistance. Required for rhodamine B resistance. Mediates the ATP-dependent efflux of rhodamine B. Involved in cadmium detoxification. Displays an energy-dependent efflux of cadmium and glutathione, suggesting that YOR1 transports both compounds as a bis-glutathionato-cadmium Cd-(GS)(2) complex. Confers resistance to rhodamine 6G and to doxorubicin. The protein is Oligomycin resistance ATP-dependent permease YOR1 of Saccharomyces cerevisiae (strain ATCC 204508 / S288c) (Baker's yeast).